The sequence spans 229 residues: ABC transporter I family member 1 (229 aa).

One can recognise an ABC transporter domain in the interval 11–228 (LLLQNVSCMR…LIDMLDRADI (218 aa)). 43–50 (GTNGSGKS) is an ATP binding site.

It belongs to the ABC transporter superfamily. ABCI family.

The protein localises to the membrane. It catalyses the reaction heme b(in) + ATP + H2O = heme b(out) + ADP + phosphate + H(+). In terms of biological role, part of the ABC transporter complex CcmAB involved in the biogenesis of c-type cytochromes; once thought to export heme, this seems not to be the case, but its exact role is uncertain. Responsible for energy coupling to the transport system. This is ABC transporter I family member 1 (ABCI1) from Arabidopsis thaliana (Mouse-ear cress).